Here is a 344-residue protein sequence, read N- to C-terminus: Thioredoxin reductase FGSG_00043 (344 aa).

FAD is bound by residues 12 to 15 (GGPA), 34 to 39 (DSVSYR), H51, and A121. Residues C165 and C168 are joined by a disulfide bond. FAD is bound by residues D314 and 321-322 (FV).

Belongs to the class-II pyridine nucleotide-disulfide oxidoreductase family. As to quaternary structure, homodimer. The cofactor is FAD.

It participates in mycotoxin biosynthesis. Functionally, thioredoxin reductase; part of the gene cluster that mediates the biosynthesis of gramillins A and B, bicyclic lipopeptides that induce cell death in maize leaves but not in wheat leaves. The nonribosomal peptide synthetase GRA1 incorporates respectively a glutamic adic (Glu), a leucine (Leu), a serine (Ser), a hydroxyglutamine (HOGln), a 2-amino decanoic acid, and 2 cysteins (CysB and CysA). The biosynthesis of 2-amino decanoic acid incorporated in gramillins could be initiated by a fatty acid synthase composed of the alpha and beta subunits FGSG_00036 and FGSG_11656. The cytochrome P450 monooxygenase FGSG_15680 could hydroxylate the fatty acid chain. Subsequent oxidation to the ketone by the oxidoreductase FGSG_00048 and transamination by aminotransferase FGSG_00049 could form 2-amino-decanoic acid. On the other hand, FGSG_15680 could also be responsible for the HO-modified glutamine at the gamma-position. Whether hydroxylation occurs on the fully assembled product or on the Gln residue prior to assembly into the gramillins requires further proof. The thioredoxin FGSG_00043 could also be required for the disulfide-bond formation between CysA and CysB. The specific involvement of the remaining proteins from the cluster is more difficult to discern, but could have broader regulatory (FGSG_00040 and FGSG_11657) or enzymatic functions (FGSG_00044 and FGSG_00045). The final C-domain of GRA1 does not possess the expected sequence of a termination CT domain, often implicated in macrocyclization and release of a cyclopeptidein fungal NRPs; and the thioesterase FGSG_00047 may act in concert with the terminal C-domain of GRA1 to catalyze the formation of the macrocyclic anhydride and release of the products. The chain is Thioredoxin reductase FGSG_00043 from Gibberella zeae (strain ATCC MYA-4620 / CBS 123657 / FGSC 9075 / NRRL 31084 / PH-1) (Wheat head blight fungus).